A 152-amino-acid polypeptide reads, in one-letter code: Transcriptional regulator MraZ (152 aa).

SpoVT-AbrB domains are found at residues 5 to 52 (ANAI…PLPE) and 81 to 124 (ATEG…DHSV).

The protein belongs to the MraZ family. As to quaternary structure, forms oligomers.

Its subcellular location is the cytoplasm. It localises to the nucleoid. In Pseudoalteromonas atlantica (strain T6c / ATCC BAA-1087), this protein is Transcriptional regulator MraZ.